The sequence spans 471 residues: Putative multidrug resistance protein MdtD (471 aa).

The Periplasmic portion of the chain corresponds to Met-1 to Gln-11. The helical transmembrane segment at Leu-12–Ala-32 threads the bilayer. The Cytoplasmic segment spans residues Leu-33–His-48. A helical membrane pass occupies residues Met-49 to Ala-69. At Asp-70–Asn-76 the chain is on the periplasmic side. A helical membrane pass occupies residues Ile-77 to Thr-97. The Cytoplasmic portion of the chain corresponds to Leu-98–Leu-101. Residues Leu-102–Met-124 traverse the membrane as a helical segment. Residues Lys-125–Thr-137 are Periplasmic-facing. The helical transmembrane segment at Phe-138 to Val-158 threads the bilayer. Residues Glu-159 to His-164 are Cytoplasmic-facing. Residues Trp-165–Met-185 form a helical membrane-spanning segment. Over Pro-186 to Asp-196 the chain is Periplasmic. The chain crosses the membrane as a helical span at residues Leu-197 to Ser-217. The Cytoplasmic segment spans residues Lys-218–Pro-224. Residues Leu-225–Ala-245 traverse the membrane as a helical segment. Over Arg-246–Thr-262 the chain is Periplasmic. The chain crosses the membrane as a helical span at residues Phe-263 to Met-283. The Cytoplasmic segment spans residues Thr-284–Pro-285. Residues Val-286–Met-306 traverse the membrane as a helical segment. Residues Val-307–Thr-341 are Periplasmic-facing. The chain crosses the membrane as a helical span at residues Leu-342–Leu-362. Residues Gln-363–Ser-395 lie on the Cytoplasmic side of the membrane. Residues Met-396–Phe-416 traverse the membrane as a helical segment. The Periplasmic segment spans residues Gly-417–Thr-430. Residues Val-431–Ala-451 traverse the membrane as a helical segment. The Cytoplasmic portion of the chain corresponds to Arg-452–Gln-471.

It belongs to the major facilitator superfamily. TCR/Tet family.

Its subcellular location is the cell inner membrane. This chain is Putative multidrug resistance protein MdtD, found in Escherichia coli (strain 55989 / EAEC).